A 340-amino-acid chain; its full sequence is N-acetyl-gamma-glutamyl-phosphate reductase (340 aa).

Cys-146 is an active-site residue.

This sequence belongs to the NAGSA dehydrogenase family. Type 1 subfamily.

The protein localises to the cytoplasm. The enzyme catalyses N-acetyl-L-glutamate 5-semialdehyde + phosphate + NADP(+) = N-acetyl-L-glutamyl 5-phosphate + NADPH + H(+). It functions in the pathway amino-acid biosynthesis; L-arginine biosynthesis; N(2)-acetyl-L-ornithine from L-glutamate: step 3/4. Catalyzes the NADPH-dependent reduction of N-acetyl-5-glutamyl phosphate to yield N-acetyl-L-glutamate 5-semialdehyde. This chain is N-acetyl-gamma-glutamyl-phosphate reductase, found in Streptococcus sanguinis (strain SK36).